The following is a 322-amino-acid chain: Tyrosine recombinase XerC (322 aa).

The segment at methionine 1–aspartate 25 is disordered. The segment covering proline 16–aspartate 25 has biased composition (low complexity). The region spanning aspartate 25–leucine 111 is the Core-binding (CB) domain. Residues lysine 132–aspartate 309 enclose the Tyr recombinase domain. Residues arginine 171, lysine 195, histidine 261, arginine 264, and histidine 287 contribute to the active site. Tyrosine 296 acts as the O-(3'-phospho-DNA)-tyrosine intermediate in catalysis.

Belongs to the 'phage' integrase family. XerC subfamily. As to quaternary structure, forms a cyclic heterotetrameric complex composed of two molecules of XerC and two molecules of XerD.

Its subcellular location is the cytoplasm. Its function is as follows. Site-specific tyrosine recombinase, which acts by catalyzing the cutting and rejoining of the recombining DNA molecules. The XerC-XerD complex is essential to convert dimers of the bacterial chromosome into monomers to permit their segregation at cell division. It also contributes to the segregational stability of plasmids. The protein is Tyrosine recombinase XerC of Xanthomonas campestris pv. campestris (strain 8004).